We begin with the raw amino-acid sequence, 834 residues long: Structure-specific endonuclease subunit SLX4 (834 aa).

Disordered regions lie at residues 80–105 (RVPR…KTTT), 272–307 (TVPA…QKGK), 332–372 (QNVA…GRPV), 401–421 (GYPE…SNSA), 603–649 (ESKP…AKAL), and 720–740 (ATPN…SIEP). The span at 279-295 (PTESSTTEDVQGSSSKQ) shows a compositional bias: polar residues. Positions 296–305 (QRVKAKKPQK) are enriched in basic residues. 2 stretches are compositionally biased toward polar residues: residues 345-366 (SNRP…TLKN) and 412-421 (DTQNSPSNSA). The segment covering 611 to 630 (DDARKNGFRKENHSDVRVRP) has biased composition (basic and acidic residues). Low complexity predominate over residues 729 to 740 (QGSSSASFSIEP).

It belongs to the SLX4 family. In terms of assembly, forms a heterodimer with SLX1. In terms of processing, phosphorylated in response to DNA damage.

It localises to the nucleus. Its function is as follows. Regulatory subunit of the SLX1-SLX4 structure-specific endonuclease that resolves DNA secondary structures generated during DNA repair and recombination. Has endonuclease activity towards branched DNA substrates, introducing single-strand cuts in duplex DNA close to junctions with ss-DNA. The chain is Structure-specific endonuclease subunit SLX4 from Ajellomyces capsulatus (strain NAm1 / WU24) (Darling's disease fungus).